Consider the following 420-residue polypeptide: MKSEELFRRASNVLPGGVSSPVRRFDPHPFFAAGGSGCLLESVDGESYIDYCLAYGPLILGHAHPRVVEAVNEQIKRGTTYGVPTEGEIELAEAIIERVPCAEMVRFTNSGTEATMAAVRLARAFTGRDRIVKFEGSYHGAHDYVLVRPGSGAATAPDSPGIPVDTVRNTLTVPFNHEEAMAELIEGAGEDIACILVEPVMGNIGCIEPENGYLQFLRDITRENDIILIFDEVITGFRLAPGGAQEYYRVEPDLVTLGKIVGGGFPMGALAGRREIMENISPAGNVYQAGTFNGNPVSVTAGRETLRLLDGRMYSDLERKGSTLRAGLRDLLSDLDLEYQVTGPASMFQLYFTGEEVRNYGDAKKSDTVLFMEYFHGLLERGVFIPPSQFECCFISAAHESEHIEATLEAAEEVLSGLKN.

At K259 the chain carries N6-(pyridoxal phosphate)lysine.

The protein belongs to the class-III pyridoxal-phosphate-dependent aminotransferase family. HemL subfamily. It depends on pyridoxal 5'-phosphate as a cofactor.

Its subcellular location is the cytoplasm. The catalysed reaction is (S)-4-amino-5-oxopentanoate = 5-aminolevulinate. Its pathway is porphyrin-containing compound metabolism; protoporphyrin-IX biosynthesis; 5-aminolevulinate from L-glutamyl-tRNA(Glu): step 2/2. The polypeptide is Glutamate-1-semialdehyde 2,1-aminomutase (hemL) (Methanothermobacter thermautotrophicus (strain ATCC 29096 / DSM 1053 / JCM 10044 / NBRC 100330 / Delta H) (Methanobacterium thermoautotrophicum)).